The chain runs to 248 residues: Trypsin I-P1 (248 aa).

The signal sequence occupies residues 1 to 15 (MKFLVLVAFVGVTVA). Positions 16-25 (FPISDEDDDK) are cleaved as a propeptide — activation peptide. One can recognise a Peptidase S1 domain in the interval 26–246 (IVGGYSCARS…YVSWIKTTMS (221 aa)). 6 disulfide bridges follow: Cys-32–Cys-162, Cys-50–Cys-66, Cys-134–Cys-235, Cys-141–Cys-208, Cys-173–Cys-187, and Cys-198–Cys-222. The Charge relay system role is filled by His-65. The Ca(2+) site is built by Glu-77, Asn-79, and Glu-87. Asp-109 (charge relay system) is an active-site residue. The active-site Charge relay system is Ser-202.

Belongs to the peptidase S1 family. Ca(2+) is required as a cofactor. High levels are seen in the pancreas while lower levels are found in the liver, spleen and thymus.

The protein localises to the secreted. It is found in the extracellular space. It catalyses the reaction Preferential cleavage: Arg-|-Xaa, Lys-|-Xaa.. The chain is Trypsin I-P1 from Gallus gallus (Chicken).